A 226-amino-acid chain; its full sequence is Probable amino-acid ABC transporter permease protein YckA (226 aa).

An ABC transmembrane type-1 domain is found at 27–215 (IGYTLLISFV…AICSIAAVFQ (189 aa)). Helical transmembrane passes span 31-51 (LLIS…ISLA), 73-93 (VPIL…GIEF), 94-114 (SAVT…IAEI), 160-180 (VLLD…PELL), and 194-214 (MTMY…AAVF).

The protein belongs to the binding-protein-dependent transport system permease family. HisMQ subfamily.

Its subcellular location is the cell membrane. In terms of biological role, part of a binding-protein-dependent transport system. Probably responsible for the translocation of the substrate across the membrane. This Bacillus subtilis (strain 168) protein is Probable amino-acid ABC transporter permease protein YckA (yckA).